Here is a 205-residue protein sequence, read N- to C-terminus: Regulator of G-protein signaling 4 (205 aa).

Residues C2, C12, and C95 are each lipidated (S-palmitoyl cysteine). An RGS domain is found at 62-178 (SLENLISHEC…LKSRFYLDLV (117 aa)).

Palmitoylated on Cys-2 and/or Cys-12. In terms of processing, phosphorylated by cyclic GMP-dependent protein kinase.

Inhibits signal transduction by increasing the GTPase activity of G protein alpha subunits thereby driving them into their inactive GDP-bound form. Activity on G(z)-alpha is inhibited by phosphorylation of the G-protein. Activity on G(z)-alpha and G(i)-alpha-1 is inhibited by palmitoylation of the G-protein. This chain is Regulator of G-protein signaling 4 (RGS4), found in Pongo abelii (Sumatran orangutan).